A 3948-amino-acid chain; its full sequence is Hybrid PKS-NRPS synthetase fsa1 (3948 aa).

Residues 4 to 438 (SEPIAVIGSA…GTNAHAIIEA (435 aa)) form the Ketosynthase family 3 (KS3) domain. Active-site for beta-ketoacyl synthase activity residues include cysteine 177, histidine 316, and histidine 358. Residues 543–846 (IFTGQGTQWP…LDTIEAISEG (304 aa)) form a malonyl-CoA:ACP transacylase (MAT) domain region. An N-terminal hotdog fold region spans residues 931-1066 (HPLLGRRCHD…AQIKASLGTP (136 aa)). The dehydratase (DH) domain stretch occupies residues 931-1233 (HPLLGRRCHD…MELVPFSPAT (303 aa)). The 305-residue stretch at 931–1235 (HPLLGRRCHD…LVPFSPATPA (305 aa)) folds into the PKS/mFAS DH domain. Residue histidine 964 is the Proton acceptor; for dehydratase activity of the active site. The segment at 1081–1235 (LRPVSVDRFY…LVPFSPATPA (155 aa)) is C-terminal hotdog fold. Catalysis depends on aspartate 1141, which acts as the Proton donor; for dehydratase activity. The interval 1381-1578 (YEQGFGLNLV…TTPPVHKILP (198 aa)) is methyltransferase (MT) domain. The interval 2105–2277 (TFLLIGLTGE…VAASSIDISS (173 aa)) is ketoreductase (KR) domain. One can recognise a Carrier 1 domain in the interval 2389–2464 (AIIKESFIVR…DLVDESLDLL (76 aa)). Serine 2424 is modified (O-(pantetheine 4'-phosphoryl)serine). A disordered region spans residues 2475–2555 (EAGNAHPAKP…TDNLTPPRTF (81 aa)). Composition is skewed to polar residues over residues 2487 to 2505 (VIPQ…QGTS) and 2513 to 2528 (GSDS…LTSW). The span at 2529-2541 (DRQDLSPPDKSDD) shows a compositional bias: basic and acidic residues. The segment covering 2542 to 2551 (APNSTDNLTP) has biased composition (polar residues). The interval 2547-2976 (DNLTPPRTFP…TQVLLRSYLS (430 aa)) is condensation (C) domain. An adenylation (A) (KR) domain region spans residues 3000–3402 (LKVAVDAGKA…PDTFFGTSGT (403 aa)). In terms of domain architecture, Carrier 2 spans 3540–3617 (KSLTASEKRL…AMASVLEDCG (78 aa)). An O-(pantetheine 4'-phosphoryl)serine modification is found at serine 3577. Residues 3653–3870 (LTGSSGYLGR…MPVNEIVEAI (218 aa)) form a reductase (RED) domain region.

This sequence in the C-terminal section; belongs to the NRP synthetase family.

The catalysed reaction is L-serine + 7 malonyl-CoA + acetyl-CoA + 2 S-adenosyl-L-methionine + ATP + 8 NADPH + 11 H(+) = (5S)-3-[(2E,6R,8E,10E,12E)-2,6-dimethyltetradeca-2,8,10,12-tetraenoyl]-5-(hydroxymethyl)pyrrolidine-2,4-dione + AMP + 2 S-adenosyl-L-homocysteine + 7 CO2 + diphosphate + 8 NADP(+) + 8 CoA + 6 H2O. It functions in the pathway mycotoxin biosynthesis. In terms of biological role, hybrid PKS-NRPS synthetase; part of the gene cluster that mediates the biosynthesis of HIV-1 integrase inhibitor equisetin and of fusarisetin A, both trans-fused decalin-containing tetramic acids showing also antimicrobial activity. The PKS module of fsa1 together with the enoylreductase fsa3 catalyze the formation of the polyketide unit which is then conjugated to L-serine by the condensation domain of the fsa1 NRPS module. Activity of the Dieckmann cyclase domain (RED) results in release of the Dieckmann product intermediate. Diels-Alderase fsa2 is involved in endo-selective Diels-Alder cycloaddition to form the decalin ring, leading to the production of N-desmethylequisetin also called trichosetin. Subsequent N-methylation is carried out by fsa4 to give equisetin. The enzymatic gene responsible for the conversion of equisetin to fusarisetin A has not been identified yet and is probably located outside of the fsa cluster. The protein is Hybrid PKS-NRPS synthetase fsa1 of Fusarium sp. (strain FN080326).